Here is a 353-residue protein sequence, read N- to C-terminus: Ribosome biogenesis protein BRX1 homolog (353 aa).

The segment at 1–50 (MAATKRKRRGGLEVQAKKPKRSSKDAGQPAKQADVAKEAEEENRDRIPGP) is disordered. Over residues 34–47 (DVAKEAEEENRDRI) the composition is skewed to basic and acidic residues. The Brix domain occupies 60-249 (ERILIFSSRG…LIKIFQGSFG (190 aa)). Lysine 160 is covalently cross-linked (Glycyl lysine isopeptide (Lys-Gly) (interchain with G-Cter in SUMO2)). Position 261 is a phosphoserine (serine 261). N6-acetyllysine is present on lysine 276. Residues lysine 314 and lysine 322 each participate in a glycyl lysine isopeptide (Lys-Gly) (interchain with G-Cter in SUMO2) cross-link. Residues 334-344 (RRIYKRHRKLQ) show a composition bias toward basic residues. Positions 334-353 (RRIYKRHRKLQQKMSRGSAK) are disordered.

This sequence belongs to the BRX1 family.

Its subcellular location is the nucleus. It is found in the nucleolus. Its function is as follows. Required for biogenesis of the 60S ribosomal subunit. The sequence is that of Ribosome biogenesis protein BRX1 homolog (Brix1) from Mus musculus (Mouse).